A 101-amino-acid polypeptide reads, in one-letter code: Small ribosomal subunit protein uS14 (101 aa).

This sequence belongs to the universal ribosomal protein uS14 family. In terms of assembly, part of the 30S ribosomal subunit. Contacts proteins S3 and S10.

Functionally, binds 16S rRNA, required for the assembly of 30S particles and may also be responsible for determining the conformation of the 16S rRNA at the A site. The chain is Small ribosomal subunit protein uS14 from Paraburkholderia phytofirmans (strain DSM 17436 / LMG 22146 / PsJN) (Burkholderia phytofirmans).